Consider the following 901-residue polypeptide: Probable inorganic carbon transporter subunit DabA (901 aa).

Residues cysteine 424, aspartate 426, histidine 606, and cysteine 621 each contribute to the Zn(2+) site.

The protein belongs to the inorganic carbon transporter (TC 9.A.2) DabA family. As to quaternary structure, forms a complex with DabB. Requires Zn(2+) as cofactor.

The protein localises to the cell membrane. Functionally, part of an energy-coupled inorganic carbon pump. This Staphylococcus aureus (strain MSSA476) protein is Probable inorganic carbon transporter subunit DabA.